The chain runs to 51 residues: Defensin-like protein 2A (51 aa).

A Pyrrolidone carboxylic acid modification is found at Gln-1. 4 disulfides stabilise this stretch: Cys-4-Cys-51, Cys-15-Cys-36, Cys-21-Cys-45, and Cys-25-Cys-47. At Ser-8 the chain carries Phosphoserine; by CPK.

In terms of assembly, forms oligomers in its native state.

In terms of biological role, possesses antifungal activity sensitive to inorganic cations. The polypeptide is Defensin-like protein 2A (Sinapis alba (White mustard)).